A 70-amino-acid polypeptide reads, in one-letter code: Conotoxin Lt11.2 (70 aa).

The N-terminal stretch at 1 to 26 is a signal peptide; the sequence is MMFRLTSVSCFLLFIVFLNLVVLTNA. Disulfide bonds link C27–C41, C34–C46, C40–C50, and C45–C54. The residue at position 57 (P57) is a Proline amide. Residues 61–70 constitute a propeptide that is removed on maturation; sequence EKLQEFFRQR.

The protein belongs to the conotoxin I2 superfamily. As to expression, expressed by the venom duct.

The protein resides in the secreted. The sequence is that of Conotoxin Lt11.2 from Conus litteratus (Lettered cone).